A 212-amino-acid chain; its full sequence is Pyrrolidone-carboxylate peptidase (212 aa).

Active-site residues include E78, C141, and H165.

The protein belongs to the peptidase C15 family. As to quaternary structure, homotetramer.

The protein resides in the cytoplasm. The enzyme catalyses Release of an N-terminal pyroglutamyl group from a polypeptide, the second amino acid generally not being Pro.. Its function is as follows. Removes 5-oxoproline from various penultimate amino acid residues except L-proline. This is Pyrrolidone-carboxylate peptidase from Staphylococcus aureus (strain Mu3 / ATCC 700698).